The sequence spans 55 residues: Large ribosomal subunit protein bL33c (55 aa).

The protein belongs to the bacterial ribosomal protein bL33 family.

It is found in the plastid. The protein resides in the chloroplast. This chain is Large ribosomal subunit protein bL33c, found in Emiliania huxleyi (Coccolithophore).